Here is a 695-residue protein sequence, read N- to C-terminus: Putative pentatricopeptide repeat-containing protein At1g77010, mitochondrial (695 aa).

The transit peptide at 1–64 directs the protein to the mitochondrion; that stretch reads MILKYNSSYR…KGFLSSIVIV (64 aa). PPR repeat units follow at residues 61 to 91, 92 to 122, 123 to 157, 159 to 184, 186 to 220, 221 to 251, 252 to 282, 283 to 313, 317 to 351, 352 to 382, 383 to 417, 418 to 448, 449 to 483, 484 to 514, 515 to 549, 550 to 585, and 586 to 616; these read IVIVANHLLQMYSRSGKMGIARNLFDEMPDR, NYFSWNTMIEGYMNSGEKGTSLRFFDMMPER, DGYSWNVVVSGFAKAGELSVARRLFNAMPEKDVVT, NSLLHGYILNGYAEEALRLFKELNFS, DAITLTTVLKACAELEALKCGKQIHAQILIGGVEC, DSKMNSSLVNVYAKCGDLRMASYMLEQIREP, DDHSLSALISGYANCGRVNESRGLFDRKSNR, CVILWNSMISGYIANNMKMEALVLFNEMRNE, DSRTLAAVINACIGLGFLETGKQMHCHACKFGLID, DIVVASTLLDMYSKCGSPMEACKLFSEVESY, DTILLNSMIKVYFSCGRIDDAKRVFERIENKSLIS, WNSMTNGFSQNGCTVETLEYFHQMHKLDLPT, DEVSLSSVISACASISSLELGEQVFARATIVGLDS, DQVVSSSLIDLYCKCGFVEHGRRVFDTMVKS, DEVPWNSMISGYATNGQGFEAIDLFKKMSVAGIRP, TQITFMVVLTACNYCGLVEEGRKLFESMKVDHGFVP, and DKEHFSCMVDLLARAGYVEEAINLVEEMPFD. Residues 621 to 695 are type E motif; degenerate; the sequence is MWSSILRGCV…KNPGSSWTDC (75 aa).

The protein belongs to the PPR family. PCMP-E subfamily.

It localises to the mitochondrion. The polypeptide is Putative pentatricopeptide repeat-containing protein At1g77010, mitochondrial (PCMP-E5) (Arabidopsis thaliana (Mouse-ear cress)).